A 463-amino-acid chain; its full sequence is MSDGFERAPGVGRGRGRGRGIETAEGGKTPGFSGASGAGDEPGRAKAAGSQQQEPLRPPRTGPPGGGGDAGAAQTSHKRTSPAAQLPAHTYTMAVSKAQPADRGRLLSNLSANAAEFYPSGYSVEANNCVEENGCYPVLPEGTLTEYVQDFLNHLTEQPGSFEAEVFPFSDVLNNCVTTDESLQELVELIYQQAISVPNFSYTGARLCNYLSNNLHINPQNQNFRQLLLKRCQTEFEKRDQAAKGDGAARKQFHAFVLFLGELYLNLEIKGAKGQVTRAEILQSGLQELLNSLFSNPVDDNLMCAVKLLKLTGSVLEDAWKEKALSCMEEVMLRMKNVVLDANCSRDVKQMLLKLVELRSSNWGRVHAASTFKEATPENDPNYFMNEPTFYTSEGVPFTAADPDYQEKYQELLDREDFFRDYDENGTDGGDSYFEDDDDNEMDPEMEEAYEKFCLESEHKKKQ.

Residues 1–86 (MSDGFERAPG…HKRTSPAAQL (86 aa)) form a disordered region. The MIF4G domain maps to 145–362 (TEYVQDFLNH…LKLVELRSSN (218 aa)). The disordered stretch occupies residues 420–442 (RDYDENGTDGGDSYFEDDDDNEM). A compositionally biased stretch (acidic residues) spans 433-442 (YFEDDDDNEM).

In terms of assembly, interacts with the RRM1-RRM2 and C-terminal regions of epabp.

The protein resides in the cytoplasm. Acts as a coactivator in the regulation of translation initiation of poly(A)-containing mRNAs. The chain is Polyadenylate-binding protein-interacting protein 1 from Xenopus laevis (African clawed frog).